Consider the following 61-residue polypeptide: Photosystem II reaction center protein K (61 aa).

The propeptide occupies 1–24 (MLNILSFIGICLNSFLYSSSFFVA). Residues 40–60 (MPVIPLFFFLLAFVWQAAVSF) traverse the membrane as a helical segment.

The protein belongs to the PsbK family. PSII is composed of 1 copy each of membrane proteins PsbA, PsbB, PsbC, PsbD, PsbE, PsbF, PsbH, PsbI, PsbJ, PsbK, PsbL, PsbM, PsbT, PsbX, PsbY, PsbZ, Psb30/Ycf12, at least 3 peripheral proteins of the oxygen-evolving complex and a large number of cofactors. It forms dimeric complexes.

It localises to the plastid. The protein resides in the chloroplast thylakoid membrane. Functionally, one of the components of the core complex of photosystem II (PSII). PSII is a light-driven water:plastoquinone oxidoreductase that uses light energy to abstract electrons from H(2)O, generating O(2) and a proton gradient subsequently used for ATP formation. It consists of a core antenna complex that captures photons, and an electron transfer chain that converts photonic excitation into a charge separation. The sequence is that of Photosystem II reaction center protein K from Cucumis sativus (Cucumber).